The following is a 782-amino-acid chain: Cadherin-5 (782 aa).

An N-terminal signal peptide occupies residues 1–22 (MQVLVMLLAAAGTYLGLLTAPT). A propeptide spanning residues 23–44 (AASNPGRQDTPSTLPLHRRQKR) is cleaved from the precursor. Cadherin domains follow at residues 45 to 148 (DWIW…WPVF), 149 to 255 (TQLV…FPVF), 256 to 370 (TQTR…PPNF), 371 to 475 (KQPF…DNAP), and 476 to 592 (EFAK…MGAQ). Topologically, residues 45–598 (DWIWNQMHID…MGAQVGVSIQ (554 aa)) are extracellular. The Ca(2+) site is built by E55 and E56. N58 carries an N-linked (GlcNAc...) asparagine glycan. Ca(2+)-binding residues include D106, E108, D140, I141, N142, D143, and N144. N-linked (GlcNAc...) asparagine glycosylation is present at N154. Residues D174, D176, H183, and D228 each coordinate Ca(2+). 4 N-linked (GlcNAc...) asparagine glycosylation sites follow: N360, N440, N522, and N534. Residues 599 to 619 (ALVAIFLCILTIAVISLLVYL) traverse the membrane as a helical segment. Residues 620-659 (RRRLRKQARAHGKSVPEIHEQLVTYDEEGGGEMDTTSYDV) are required for interaction with PALS1. Residues 620-782 (RRRLRKQARA…GSDPREELLY (163 aa)) are Cytoplasmic-facing.

As to quaternary structure, part of a complex composed of AMOTL2, MAGI1 and CDH5, within the complex AMOTL2 acts as a scaffold protein for the interaction of MAGI1 with CDH5. The complex is required for coupling actin fibers to cell junctions in endothelial cells. Within the complex AMOTL2 (via its N-terminus) interacts with CDH5. Interacts (via cadherin 5 domain) with PTPRB. Interacts with TRPC4. Interacts with KRIT1. Interacts with PARD3. Interacts with RTN4 (isoform B). Interacts with PALS1; the interaction promotes PALS1 localization to cell junctions and is required for CDH5-mediated vascular lumen formation and endothelial cell. Interacts with CTNND1/p120-catenin; the interaction controls CADH5 endocytosis. Phosphorylated on tyrosine residues by KDR/VEGFR-2. Dephosphorylated by PTPRB. Post-translationally, O-glycosylated.

The protein localises to the cell junction. Its subcellular location is the adherens junction. It localises to the cell membrane. The protein resides in the cytoplasm. In terms of biological role, cadherins are calcium-dependent cell adhesion proteins. They preferentially interact with themselves in a homophilic manner in connecting cells; cadherins may thus contribute to the sorting of heterogeneous cell types. This cadherin may play a important role in endothelial cell biology through control of the cohesion and organization of the intercellular junctions. It associates with alpha-catenin forming a link to the cytoskeleton. Plays a role in coupling actin fibers to cell junctions in endothelial cells, via acting as a cell junctional complex anchor for AMOTL2 and MAGI1. Acts in concert with KRIT1 and PALS1 to establish and maintain correct endothelial cell polarity and vascular lumen. These effects are mediated by recruitment and activation of the Par polarity complex and RAP1B. Required for activation of PRKCZ and for localization of phosphorylated PRKCZ, PARD3, TIAM1 and RAP1B to the cell junction. Associates with CTNND1/p120-catenin to control CADH5 endocytosis. This is Cadherin-5 from Sus scrofa (Pig).